A 258-amino-acid polypeptide reads, in one-letter code: 5'-nucleotidase SurE (258 aa).

A divalent metal cation is bound by residues Asp-9, Asp-10, Ser-42, and Asn-95.

This sequence belongs to the SurE nucleotidase family. Requires a divalent metal cation as cofactor.

Its subcellular location is the cytoplasm. It carries out the reaction a ribonucleoside 5'-phosphate + H2O = a ribonucleoside + phosphate. Its function is as follows. Nucleotidase that shows phosphatase activity on nucleoside 5'-monophosphates. This chain is 5'-nucleotidase SurE, found in Campylobacter concisus (strain 13826).